We begin with the raw amino-acid sequence, 65 residues long: Large ribosomal subunit protein bL35 (65 aa).

It belongs to the bacterial ribosomal protein bL35 family.

The polypeptide is Large ribosomal subunit protein bL35 (Acetivibrio thermocellus (strain ATCC 27405 / DSM 1237 / JCM 9322 / NBRC 103400 / NCIMB 10682 / NRRL B-4536 / VPI 7372) (Clostridium thermocellum)).